A 409-amino-acid polypeptide reads, in one-letter code: Snake venom metalloproteinase BITM02A (409 aa).

The first 20 residues, 1–20 (MIEVLLVTICLAAFPYQGSS), serve as a signal peptide directing secretion. Residues 21–189 (IILESGNVND…KKASQSNLTP (169 aa)) constitute a propeptide that is removed on maturation. A Peptidase M12B domain is found at 193 to 389 (RYIELFIVVD…ENPQCILNKR (197 aa)). The Ca(2+) site is built by glutamate 196 and aspartate 280. 3 disulfide bridges follow: cysteine 304/cysteine 384, cysteine 344/cysteine 368, and cysteine 346/cysteine 351. Histidine 329 is a binding site for Zn(2+). Glutamate 330 is a catalytic residue. Zn(2+) contacts are provided by histidine 333 and histidine 339. Positions 384, 387, 399, 402, 404, 406, and 409 each coordinate Ca(2+). Residues 390–409 (LRTDTVSTPVSGNELLEAGE) constitute a propeptide that is removed on maturation.

The protein belongs to the venom metalloproteinase (M12B) family. P-I subfamily. In terms of assembly, monomer. Zn(2+) serves as cofactor. Expressed by the venom gland.

The protein localises to the secreted. Functionally, snake venom metalloproteinase that impairs hemostasis in the envenomed animal. This is Snake venom metalloproteinase BITM02A from Bothrops insularis (Golden lancehead).